Here is a 379-residue protein sequence, read N- to C-terminus: Putative cysteine desulfurase IscS 1 (379 aa).

Residues 71–72, N151, Q179, and 199–201 contribute to the pyridoxal 5'-phosphate site; these read GT and SGH. Position 202 is an N6-(pyridoxal phosphate)lysine (K202). T237 contacts pyridoxal 5'-phosphate. Catalysis depends on C325, which acts as the Cysteine persulfide intermediate. Residue C325 participates in [2Fe-2S] cluster binding.

The protein belongs to the class-V pyridoxal-phosphate-dependent aminotransferase family. NifS/IscS subfamily. It depends on pyridoxal 5'-phosphate as a cofactor.

The enzyme catalyses (sulfur carrier)-H + L-cysteine = (sulfur carrier)-SH + L-alanine. In terms of biological role, catalyzes the removal of elemental sulfur from cysteine to produce alanine. The sequence is that of Putative cysteine desulfurase IscS 1 (iscS1) from Bacillus subtilis (strain 168).